A 443-amino-acid chain; its full sequence is Ribulose bisphosphate carboxylase large chain (443 aa).

The substrate site is built by Asn89 and Thr139. Lys141 (proton acceptor) is an active-site residue. Lys143 contacts substrate. Residues Lys167, Asp169, and Glu170 each coordinate Mg(2+). N6-carboxylysine is present on Lys167. His260 acts as the Proton acceptor in catalysis. Substrate-binding residues include Arg261, His293, and Ser345.

This sequence belongs to the RuBisCO large chain family. Type I subfamily. Heterohexadecamer of 8 large chains and 8 small chains; disulfide-linked. The disulfide link is formed within the large subunit homodimers. Requires Mg(2+) as cofactor. Post-translationally, the disulfide bond which can form in the large chain dimeric partners within the hexadecamer appears to be associated with oxidative stress and protein turnover.

Its subcellular location is the plastid. It localises to the chloroplast. The enzyme catalyses 2 (2R)-3-phosphoglycerate + 2 H(+) = D-ribulose 1,5-bisphosphate + CO2 + H2O. It catalyses the reaction D-ribulose 1,5-bisphosphate + O2 = 2-phosphoglycolate + (2R)-3-phosphoglycerate + 2 H(+). RuBisCO catalyzes two reactions: the carboxylation of D-ribulose 1,5-bisphosphate, the primary event in carbon dioxide fixation, as well as the oxidative fragmentation of the pentose substrate in the photorespiration process. Both reactions occur simultaneously and in competition at the same active site. The polypeptide is Ribulose bisphosphate carboxylase large chain (Antirrhinum majus (Garden snapdragon)).